Reading from the N-terminus, the 350-residue chain is Calcium uniporter protein, mitochondrial (350 aa).

Residues Met-1–Thr-49 constitute a mitochondrion transit peptide. The Mitochondrial matrix segment spans residues Ala-50 to Thr-232. Phosphoserine; by CaMK2 is present on residues Ser-56 and Ser-91. Positions Val-74 to Arg-164 are N-terminal MCU domain. An S-glutathionyl cysteine modification is found at Cys-96. Residues Ile-191 to Arg-220 are a coiled coil. A helical transmembrane segment spans residues Leu-233 to Glu-256. Residues Tyr-257 to Pro-264 lie on the Mitochondrial intermembrane side of the membrane. The Selectivity filter motif lies at Trp-259–Tyr-267. Glu-263 is a binding site for Ca(2+). Residues Val-265–Val-282 form a helical membrane-spanning segment. Residues Met-283–Glu-350 lie on the Mitochondrial matrix side of the membrane. Residues Thr-284 to Val-289 form a juxtamembrane helix region. Residues Arg-310–Gln-338 are a coiled coil. N6-acetyllysine is present on Lys-331.

The protein belongs to the MCU (TC 1.A.77) family. In terms of assembly, homotetramer. Component of the uniplex complex, composed of MCU, EMRE/SMDT1, MICU1 and MICU2 (or MICU3) in a 4:4:1:1 stoichiometry. Interacts with CCDC109B/MCUB; this inhibits channel activity. Interacts with MCUR1. Interactions with MICU1 and MCUR1 are mutually exclusive. Interacts with SLC25A23. Phosphorylation by CaMK2 in heart leads to increased MCU current. The regulation of MCU by CaMK2 is however subject to discussion: another group was unable to reproduce these results. Phosphorylated on tyrosines by PTK2B/PYK2, promoting oligomerization. Post-translationally, glutathionylation at Cys-96 in response to reactive oxygen species (ROS) promotes MCU higher-order assembly, leading to constitutive activation of the MCU channel and mitochondrial calcium overload. In terms of processing, undergoes proteolytic degradation by SPG7. In terms of tissue distribution, detected in heart muscle (at protein level). Expressed in skeletal muscle, heart, kidney, liver, brain, lung, white fat and spleen.

Its subcellular location is the mitochondrion inner membrane. It carries out the reaction Ca(2+)(in) = Ca(2+)(out). Its activity is regulated as follows. MCU channel activity is regulated by the heterodimer composed of MICU1 and either MICU2 or MICU3, which act as calcium-sensors. At low calcium levels, MICU1 occludes the pore of the MCU channel, preventing mitochondrial calcium uptake. At higher calcium levels, calcium-binding to MICU1 and MICU2 (or MICU3) induces a conformational change that weakens MCU-MICU1 interactions and moves the MICU1-MICU2 heterodimer away from the pore, allowing calcium permeation through the channel. MCU channel activity is gated by EMRE/SMDT1 via the juxtamembrane helix loop. Inhibited by ruthenium red or its derivative Ru360. In terms of biological role, channel-forming and calcium-conducting subunit of the mitochondrial inner membrane calcium uniporter complex (uniplex), which mediates calcium uptake into the mitochondrial matrix. MCU channel activity is regulated by the calcium-sensor subunits of the uniplex MICU1 and MICU2 (or MICU3). Mitochondrial calcium homeostasis plays key roles in cellular physiology and regulates ATP production, cytoplasmic calcium signals and activation of cell death pathways. Involved in buffering the amplitude of systolic calcium rises in cardiomyocytes. While dispensable for baseline homeostatic cardiac function, acts as a key regulator of short-term mitochondrial calcium loading underlying a 'fight-or-flight' response during acute stress: acts by mediating a rapid increase of mitochondrial calcium in pacemaker cells. Participates in mitochondrial permeability transition during ischemia-reperfusion injury. Mitochondrial calcium uptake in skeletal muscle cells is involved in muscle size in adults. Regulates synaptic vesicle endocytosis kinetics in central nerve terminal. Regulates glucose-dependent insulin secretion in pancreatic beta-cells by regulating mitochondrial calcium uptake. Involved in antigen processing and presentation. In Mus musculus (Mouse), this protein is Calcium uniporter protein, mitochondrial.